We begin with the raw amino-acid sequence, 298 residues long: Oxygen-dependent coproporphyrinogen-III oxidase (298 aa).

A substrate-binding site is contributed by Ser92. A divalent metal cation contacts are provided by His96 and His106. The active-site Proton donor is the His106. 108–110 (NVR) contributes to the substrate binding site. Positions 145 and 175 each coordinate a divalent metal cation. The tract at residues 239-274 (YVEFNLVYDRGTLFGLQSGGRSESILMSLPPRVRWE) is important for dimerization. Substrate is bound at residue 257–259 (GGR).

The protein belongs to the aerobic coproporphyrinogen-III oxidase family. In terms of assembly, homodimer. A divalent metal cation is required as a cofactor.

It localises to the cytoplasm. The enzyme catalyses coproporphyrinogen III + O2 + 2 H(+) = protoporphyrinogen IX + 2 CO2 + 2 H2O. It participates in porphyrin-containing compound metabolism; protoporphyrin-IX biosynthesis; protoporphyrinogen-IX from coproporphyrinogen-III (O2 route): step 1/1. Involved in the heme biosynthesis. Catalyzes the aerobic oxidative decarboxylation of propionate groups of rings A and B of coproporphyrinogen-III to yield the vinyl groups in protoporphyrinogen-IX. This is Oxygen-dependent coproporphyrinogen-III oxidase from Stenotrophomonas maltophilia (strain K279a).